Consider the following 426-residue polypeptide: 3-phosphoshikimate 1-carboxyvinyltransferase (426 aa).

3-phosphoshikimate contacts are provided by lysine 22, serine 23, and arginine 27. Lysine 22 is a phosphoenolpyruvate binding site. Positions 96 and 124 each coordinate phosphoenolpyruvate. 3-phosphoshikimate contacts are provided by serine 170, serine 171, glutamine 172, serine 198, aspartate 314, asparagine 337, and lysine 341. Glutamine 172 contributes to the phosphoenolpyruvate binding site. Catalysis depends on aspartate 314, which acts as the Proton acceptor. Positions 345, 387, and 412 each coordinate phosphoenolpyruvate.

It belongs to the EPSP synthase family. In terms of assembly, monomer.

The protein resides in the cytoplasm. The enzyme catalyses 3-phosphoshikimate + phosphoenolpyruvate = 5-O-(1-carboxyvinyl)-3-phosphoshikimate + phosphate. It participates in metabolic intermediate biosynthesis; chorismate biosynthesis; chorismate from D-erythrose 4-phosphate and phosphoenolpyruvate: step 6/7. Catalyzes the transfer of the enolpyruvyl moiety of phosphoenolpyruvate (PEP) to the 5-hydroxyl of shikimate-3-phosphate (S3P) to produce enolpyruvyl shikimate-3-phosphate and inorganic phosphate. In Shewanella halifaxensis (strain HAW-EB4), this protein is 3-phosphoshikimate 1-carboxyvinyltransferase.